The chain runs to 500 residues: Amino-acid acetyltransferase, mitochondrial (500 aa).

The transit peptide at 1 to 19 (MQKPSLSQDLIWILKSVQS) directs the protein to the mitochondrion. The region spanning 336–496 (FLGPKCLTDG…YMSVIDKIQP (161 aa)) is the N-acetyltransferase domain.

This sequence belongs to the acetyltransferase family.

The protein resides in the mitochondrion. It carries out the reaction L-glutamate + acetyl-CoA = N-acetyl-L-glutamate + CoA + H(+). It functions in the pathway amino-acid biosynthesis; L-arginine biosynthesis; N(2)-acetyl-L-ornithine from L-glutamate: step 1/4. Functionally, N-acetylglutamate synthase involved in arginine biosynthesis. In Schizosaccharomyces pombe (strain 972 / ATCC 24843) (Fission yeast), this protein is Amino-acid acetyltransferase, mitochondrial (arg6).